The following is a 119-amino-acid chain: UPF0102 protein FN1370 (119 aa).

The protein belongs to the UPF0102 family.

The chain is UPF0102 protein FN1370 from Fusobacterium nucleatum subsp. nucleatum (strain ATCC 25586 / DSM 15643 / BCRC 10681 / CIP 101130 / JCM 8532 / KCTC 2640 / LMG 13131 / VPI 4355).